The following is a 483-amino-acid chain: Glutamyl-tRNA(Gln) amidotransferase subunit A (483 aa).

Residues K76 and S151 each act as charge relay system in the active site. The active-site Acyl-ester intermediate is the S175.

The protein belongs to the amidase family. GatA subfamily. In terms of assembly, heterotrimer of A, B and C subunits.

It catalyses the reaction L-glutamyl-tRNA(Gln) + L-glutamine + ATP + H2O = L-glutaminyl-tRNA(Gln) + L-glutamate + ADP + phosphate + H(+). Allows the formation of correctly charged Gln-tRNA(Gln) through the transamidation of misacylated Glu-tRNA(Gln) in organisms which lack glutaminyl-tRNA synthetase. The reaction takes place in the presence of glutamine and ATP through an activated gamma-phospho-Glu-tRNA(Gln). The polypeptide is Glutamyl-tRNA(Gln) amidotransferase subunit A (Coxiella burnetii (strain CbuK_Q154) (Coxiella burnetii (strain Q154))).